We begin with the raw amino-acid sequence, 1295 residues long: MMEILRGSPALSAFRINKLLARFQAARLPVHNIYAEYVHFADLNAPLNDDEHAQLERLLKYGPALASHAPQGKLLLVTPRPGTISPWSSKATDIAHNCGLQQVNRLERGVAYYIEAGTLTNEQWQQVTAELHDRMMETVFFDLDDAEQLFAHHQPTPVTSVDLLGQGRQALIDANLRLGLALAEDEIDYLQDAFTKLGRNPNDIELYMFAQANSEHCRHKIFNADWIIDGEQQPKSLFRMIKNTFETTPDHVLSAYKDNAAVMEGSEVGRYFADHETGRYDFHQEPAHILMKVETHNHPTAISPWPGAATGSGGEIRDEGATGRGAKPKAGLVGFSVSNLRILGFEQPWEEDFGKPERIVTALDIMTEGPLGGAAFNNEFGRPALNGYFRTYEEKVNSHNGEELRGYHKPIMLAGGIGNIRADHVQKGEINVGAKLVVLGGPAMNIGLGGGAASSMASGQSDADLDFASVQRDNPEMERRCQEVIDRCWQLGDANPILFIHDVGAGGLSNAMPELVSDGGRGGKFELRDILSDEPGMSPLEIWCNESQERYVLAVAADQLPLFDELCKRERAPYAVIGEATEELHLSLHDRHFDNQPIDLPLDVLLGKTPKMTRDVQTLKAKGDALVREGITIADAVKRILHLPTVAEKTFLVTIGDRSVTGMVARDQMVGPWQVPVANCAVTTASLDSYYGEAMAIGERAPVALLDFAASARLAVGEALTNIAATQIGDIKRIKLSANWMAAAGHPGEDAGLYEAVKAVGEELCPALGLTIPVGKDSMSMKTRWQEGNEEREMTSPLSLVISAFARVEDVRHTITPQLSTEDNALLLIDLGKGNNALGATALAQVYRQLGDKPADVRDVAQLKGFYDAIQALVAQRKLLAYHDRSDGGLLVTLAEMAFAGHCGINADIASLGDDRLAALFNEELGAVIQVRAADREAVESVLAQHGLADCVHYVGQAVSGDRFVITANGETVFSESRTTLRVWWAETTWQMQRLRDNPECADQEHQAKSNDADPGLNVKLSFDINEDVAAPYIATGARPKVAVLREQGVNSHVEMAAAFHRAGFDAIDVHMSDLLTGRTGLEDFHALVACGGFSYGDVLGAGEGWAKSILFNDRVRDEFATFFHRPQTLALGVCNGCQMMSNLRELIPGSELWPRFVRNTSDRFEARFSLVEVTQSPSLLLQGMVGSQMPIAVSHGEGRVEVRDAAHLAALESKGLVALRYVDNFGKVTETYPANPNGSPNGITAVTTESGRVTIMMPHPERVFRTVSNSWHPENWGEDGPWMRIFRNARKQLG.

The segment at 305–327 is disordered; that stretch reads WPGAATGSGGEIRDEGATGRGAK. ATP is bound by residues 307-318 and A678; that span reads GAATGSGGEIRD. Residues E718, N722, and D884 each contribute to the Mg(2+) site. ATP is bound at residue S886. The Glutamine amidotransferase type-1 domain maps to 1042-1295; it reads VAVLREQGVN…IFRNARKQLG (254 aa). Catalysis depends on C1135, which acts as the Nucleophile. Active-site residues include H1260 and E1262.

This sequence in the N-terminal section; belongs to the FGAMS family. In terms of assembly, monomer.

Its subcellular location is the cytoplasm. The enzyme catalyses N(2)-formyl-N(1)-(5-phospho-beta-D-ribosyl)glycinamide + L-glutamine + ATP + H2O = 2-formamido-N(1)-(5-O-phospho-beta-D-ribosyl)acetamidine + L-glutamate + ADP + phosphate + H(+). It participates in purine metabolism; IMP biosynthesis via de novo pathway; 5-amino-1-(5-phospho-D-ribosyl)imidazole from N(2)-formyl-N(1)-(5-phospho-D-ribosyl)glycinamide: step 1/2. In terms of biological role, phosphoribosylformylglycinamidine synthase involved in the purines biosynthetic pathway. Catalyzes the ATP-dependent conversion of formylglycinamide ribonucleotide (FGAR) and glutamine to yield formylglycinamidine ribonucleotide (FGAM) and glutamate. The sequence is that of Phosphoribosylformylglycinamidine synthase from Shigella boydii serotype 4 (strain Sb227).